The sequence spans 630 residues: Biosynthetic arginine decarboxylase (630 aa).

The residue at position 99 (Lys99) is an N6-(pyridoxal phosphate)lysine. Val281 to Tyr291 is a substrate binding site.

This sequence belongs to the Orn/Lys/Arg decarboxylase class-II family. SpeA subfamily. Mg(2+) is required as a cofactor. Pyridoxal 5'-phosphate serves as cofactor.

It catalyses the reaction L-arginine + H(+) = agmatine + CO2. It participates in amine and polyamine biosynthesis; agmatine biosynthesis; agmatine from L-arginine: step 1/1. Functionally, catalyzes the biosynthesis of agmatine from arginine. This Phocaeicola vulgatus (strain ATCC 8482 / DSM 1447 / JCM 5826 / CCUG 4940 / NBRC 14291 / NCTC 11154) (Bacteroides vulgatus) protein is Biosynthetic arginine decarboxylase.